The sequence spans 338 residues: Glyceraldehyde-3-phosphate dehydrogenase 1 (338 aa).

Residues 13 to 14 and G111 each bind NAD(+); that span reads TI. Position 140-142 (140-142) interacts with D-glyceraldehyde 3-phosphate; that stretch reads SCN. C141 (nucleophile) is an active-site residue. R169 lines the NAD(+) pocket. 195-196 lines the D-glyceraldehyde 3-phosphate pocket; sequence HG. NAD(+) is bound at residue Q300.

Belongs to the glyceraldehyde-3-phosphate dehydrogenase family. In terms of assembly, homotetramer.

The protein resides in the cytoplasm. It carries out the reaction D-glyceraldehyde 3-phosphate + phosphate + NADP(+) = (2R)-3-phospho-glyceroyl phosphate + NADPH + H(+). The catalysed reaction is D-glyceraldehyde 3-phosphate + phosphate + NAD(+) = (2R)-3-phospho-glyceroyl phosphate + NADH + H(+). It participates in carbohydrate degradation; glycolysis; pyruvate from D-glyceraldehyde 3-phosphate: step 1/5. The polypeptide is Glyceraldehyde-3-phosphate dehydrogenase 1 (Methanosarcina barkeri (strain Fusaro / DSM 804)).